The sequence spans 361 residues: Phospho-N-acetylmuramoyl-pentapeptide-transferase (361 aa).

10 consecutive transmembrane segments (helical) span residues 27–47 (GAIVTAVLFVFLFGPGIISTL), 72–92 (TPTMGGLMIFSGLIVATLLWA), 94–114 (LSNLYVWVVLFVTTGFGLIGF), 133–153 (ARLAIEALIAGIAVVLMINAG), 169–189 (LLLDLGWFFVVFGAFVIVAAG), 200–220 (GLAIVPVMIAAASFGMISYLS), 237–257 (VGELAVICGAIIGAGLGFLWF), 264–284 (IFMGDTGSLALGGLLGSIAVA), 289–309 (IVLAVIGGLFVLEAVSVIVQV), and 338–358 (QVVIRFWIIAVVLALLGLATL).

It belongs to the glycosyltransferase 4 family. MraY subfamily. Mg(2+) is required as a cofactor.

It localises to the cell inner membrane. The enzyme catalyses UDP-N-acetyl-alpha-D-muramoyl-L-alanyl-gamma-D-glutamyl-meso-2,6-diaminopimeloyl-D-alanyl-D-alanine + di-trans,octa-cis-undecaprenyl phosphate = di-trans,octa-cis-undecaprenyl diphospho-N-acetyl-alpha-D-muramoyl-L-alanyl-D-glutamyl-meso-2,6-diaminopimeloyl-D-alanyl-D-alanine + UMP. It functions in the pathway cell wall biogenesis; peptidoglycan biosynthesis. Its function is as follows. Catalyzes the initial step of the lipid cycle reactions in the biosynthesis of the cell wall peptidoglycan: transfers peptidoglycan precursor phospho-MurNAc-pentapeptide from UDP-MurNAc-pentapeptide onto the lipid carrier undecaprenyl phosphate, yielding undecaprenyl-pyrophosphoryl-MurNAc-pentapeptide, known as lipid I. In Azorhizobium caulinodans (strain ATCC 43989 / DSM 5975 / JCM 20966 / LMG 6465 / NBRC 14845 / NCIMB 13405 / ORS 571), this protein is Phospho-N-acetylmuramoyl-pentapeptide-transferase.